The chain runs to 465 residues: Argininosuccinate lyase (465 aa).

It belongs to the lyase 1 family. Argininosuccinate lyase subfamily.

The protein localises to the cytoplasm. The catalysed reaction is 2-(N(omega)-L-arginino)succinate = fumarate + L-arginine. The protein operates within amino-acid biosynthesis; L-arginine biosynthesis; L-arginine from L-ornithine and carbamoyl phosphate: step 3/3. This chain is Argininosuccinate lyase, found in Rhodopseudomonas palustris (strain HaA2).